We begin with the raw amino-acid sequence, 380 residues long: Cytochrome b (380 aa).

A run of 4 helical transmembrane segments spans residues 34–54 (FGSLLAVCLATQIITGLLLAM), 78–99 (WLIRNLHANGASFFFICIFLHI), 114–134 (WNTGVVLLLTLMATAFVGYVL), and 179–199 (FFALHFLLPFVIAGITIIHLT). 2 residues coordinate heme b: H84 and H98. Residues H183 and H197 each coordinate heme b. H202 lines the a ubiquinone pocket. Transmembrane regions (helical) follow at residues 227–247 (LKDILGLTLMFIPFLTLALFS), 289–309 (LGGVLALAASVLILLLIPFLH), 321–341 (LSQILFWLLVANLLILTWIGS), and 348–368 (FIIIGQMASFSYFSILLILFP).

It belongs to the cytochrome b family. The cytochrome bc1 complex contains 11 subunits: 3 respiratory subunits (MT-CYB, CYC1 and UQCRFS1), 2 core proteins (UQCRC1 and UQCRC2) and 6 low-molecular weight proteins (UQCRH/QCR6, UQCRB/QCR7, UQCRQ/QCR8, UQCR10/QCR9, UQCR11/QCR10 and a cleavage product of UQCRFS1). This cytochrome bc1 complex then forms a dimer. Heme b serves as cofactor.

Its subcellular location is the mitochondrion inner membrane. Its function is as follows. Component of the ubiquinol-cytochrome c reductase complex (complex III or cytochrome b-c1 complex) that is part of the mitochondrial respiratory chain. The b-c1 complex mediates electron transfer from ubiquinol to cytochrome c. Contributes to the generation of a proton gradient across the mitochondrial membrane that is then used for ATP synthesis. The sequence is that of Cytochrome b (MT-CYB) from Pavo muticus (Green peafowl).